The chain runs to 653 residues: MEMVNFIFGIHNHQPLGNFGWVMESAYERSYRPFMETLEEYPNMKVAVHYSGPLLEWIRDNKPEHLDLLRSLVKRGQLEIVVAGFYEPVLASIPKEDRIVQIEKLKEFARNLGYEARGVWLTERVWQPELVKSLRAAGIDYVIVDDYHFMSAGLSKDELFWPYYTEDGGEVITVFPIDEKLRYLIPFRPVDKTLEYLHSLDDGDESKVAVFHDDGEKFGVWPGTYEWVYEKGWLREFFDRVSSDERINLMLYSEYLQRFRPRGLVYLPIASYFEMSEWSLPARQAKLFVEFVEELKKENKFDRYRVFVRGGIWKNFFFKYPESNYMHKRMLMVSKAVRNNPEAREFILRAQCNDAYWHGVFGGVYLPHLRRAVWENIIKAQSHVKTGNFVRDIDFDGRDEVFIENENFYAVFKPAYGGALFELSSKRKAVNYNDVLARRWEHYHEVPEAATPEEGGEGVASIHELGKQIPDEIRRELAYDSHLRAILQDHFLEPETTLDEYRLSRYIELGDFLTGAYNFSLIENGITLERDGSVAKRPARVEKSVRLTEDGFIVDYTVRSDARALFGVELNLAVHSVMEEPAEFEAEKFEVNDPYGIGKVEIELDRRAKVWKYPIKTLSQSESGWDFIQQGVSYTVLFPVEGELRFRLRFREL.

Glu-123 functions as the Nucleophile in the catalytic mechanism. Residue Asp-214 is the Proton donor of the active site.

Belongs to the glycosyl hydrolase 57 family.

It catalyses the reaction Transfers a segment of a (1-&gt;4)-alpha-D-glucan to a new position in an acceptor, which may be glucose or a (1-&gt;4)-alpha-D-glucan.. The protein is 4-alpha-glucanotransferase of Thermococcus kodakarensis (strain ATCC BAA-918 / JCM 12380 / KOD1) (Pyrococcus kodakaraensis (strain KOD1)).